The following is a 410-amino-acid chain: LL-diaminopimelate aminotransferase (410 aa).

Substrate-binding residues include Tyr15 and Gly42. Residues Tyr72, Ala108–Lys109, Tyr132, Asn188, Tyr219, and Ser247–Ser249 contribute to the pyridoxal 5'-phosphate site. Residues Lys109, Tyr132, and Asn188 each contribute to the substrate site. At Lys250 the chain carries N6-(pyridoxal phosphate)lysine. Pyridoxal 5'-phosphate-binding residues include Arg258 and Asn293. Substrate contacts are provided by Asn293 and Arg389.

The protein belongs to the class-I pyridoxal-phosphate-dependent aminotransferase family. LL-diaminopimelate aminotransferase subfamily. Homodimer. Pyridoxal 5'-phosphate is required as a cofactor.

It catalyses the reaction (2S,6S)-2,6-diaminopimelate + 2-oxoglutarate = (S)-2,3,4,5-tetrahydrodipicolinate + L-glutamate + H2O + H(+). Its pathway is amino-acid biosynthesis; L-lysine biosynthesis via DAP pathway; LL-2,6-diaminopimelate from (S)-tetrahydrodipicolinate (aminotransferase route): step 1/1. Its function is as follows. Involved in the synthesis of meso-diaminopimelate (m-DAP or DL-DAP), required for both lysine and peptidoglycan biosynthesis. Catalyzes the direct conversion of tetrahydrodipicolinate to LL-diaminopimelate. In Bacteroides thetaiotaomicron (strain ATCC 29148 / DSM 2079 / JCM 5827 / CCUG 10774 / NCTC 10582 / VPI-5482 / E50), this protein is LL-diaminopimelate aminotransferase.